The chain runs to 323 residues: tRNA dimethylallyltransferase (323 aa).

ATP is bound at residue G12–T19. T14–T19 provides a ligand contact to substrate. 2 interaction with substrate tRNA regions span residues D37–L40 and Q161–R165.

The protein belongs to the IPP transferase family. As to quaternary structure, monomer. Requires Mg(2+) as cofactor.

The enzyme catalyses adenosine(37) in tRNA + dimethylallyl diphosphate = N(6)-dimethylallyladenosine(37) in tRNA + diphosphate. In terms of biological role, catalyzes the transfer of a dimethylallyl group onto the adenine at position 37 in tRNAs that read codons beginning with uridine, leading to the formation of N6-(dimethylallyl)adenosine (i(6)A). The protein is tRNA dimethylallyltransferase of Pseudomonas putida (strain ATCC 47054 / DSM 6125 / CFBP 8728 / NCIMB 11950 / KT2440).